A 130-amino-acid chain; its full sequence is Small ribosomal subunit protein uS8 (130 aa).

The protein belongs to the universal ribosomal protein uS8 family. Part of the 30S ribosomal subunit. Contacts proteins S5 and S12.

One of the primary rRNA binding proteins, it binds directly to 16S rRNA central domain where it helps coordinate assembly of the platform of the 30S subunit. In Stutzerimonas stutzeri (strain A1501) (Pseudomonas stutzeri), this protein is Small ribosomal subunit protein uS8.